A 739-amino-acid chain; its full sequence is MICOS complex subunit Mic60 (739 aa).

The interval 23–63 is disordered; that stretch reads ANNRQFGGSSSGSGGREQGRRQQEEQGQQGDQGYQGYQSLP. The span at 47–61 shows a compositional bias: low complexity; that stretch reads EQGQQGDQGYQGYQS. The helical transmembrane segment at 69-89 threads the bilayer; the sequence is AGFGKVVLFVSPLAAVGGVIT. Residues 154–219 are disordered; sequence VTGLFGGGSG…PAAKPKDNPL (66 aa). Residues 163–198 are compositionally biased toward basic and acidic residues; sequence GDDKSKKSKVEPVKATPAEEKRPSKPSEVSKTEAKP. Residues 199 to 212 show a composition bias toward low complexity; it reads VSKPAAAAAPAPAA. Positions 283-339 form a coiled coil; that stretch reads TAVATAERAAREAQEKIVACEIALSAAATAQNAKKVEAVRDKIKKLVDHIGNVKDEL.

The protein belongs to the MICOS complex subunit Mic60 family. Component of the mitochondrial contact site and cristae organizing system (MICOS) complex. Interacts with the mitochondria-shaping protein Opa1.

It is found in the mitochondrion inner membrane. Its function is as follows. Component of the MICOS complex, a large protein complex of the mitochondrial inner membrane that plays crucial roles in the maintenance of crista junctions, inner membrane architecture, and formation of contact sites to the outer membrane. The chain is MICOS complex subunit Mic60 from Drosophila melanogaster (Fruit fly).